The primary structure comprises 408 residues: Tryptophan synthase beta chain (408 aa).

N6-(pyridoxal phosphate)lysine is present on lysine 90.

The protein belongs to the TrpB family. Tetramer of two alpha and two beta chains. The cofactor is pyridoxal 5'-phosphate.

The enzyme catalyses (1S,2R)-1-C-(indol-3-yl)glycerol 3-phosphate + L-serine = D-glyceraldehyde 3-phosphate + L-tryptophan + H2O. It participates in amino-acid biosynthesis; L-tryptophan biosynthesis; L-tryptophan from chorismate: step 5/5. Its function is as follows. The beta subunit is responsible for the synthesis of L-tryptophan from indole and L-serine. The polypeptide is Tryptophan synthase beta chain (Bacillus licheniformis (strain ATCC 14580 / DSM 13 / JCM 2505 / CCUG 7422 / NBRC 12200 / NCIMB 9375 / NCTC 10341 / NRRL NRS-1264 / Gibson 46)).